Consider the following 423-residue polypeptide: Serine--tRNA ligase (423 aa).

231–233 (TAE) lines the L-serine pocket. Residue 262–264 (RSE) coordinates ATP. Position 285 (glutamate 285) interacts with L-serine. 349–352 (EISS) provides a ligand contact to ATP. Serine 384 is a binding site for L-serine.

This sequence belongs to the class-II aminoacyl-tRNA synthetase family. Type-1 seryl-tRNA synthetase subfamily. In terms of assembly, homodimer. The tRNA molecule binds across the dimer.

It localises to the cytoplasm. The catalysed reaction is tRNA(Ser) + L-serine + ATP = L-seryl-tRNA(Ser) + AMP + diphosphate + H(+). It catalyses the reaction tRNA(Sec) + L-serine + ATP = L-seryl-tRNA(Sec) + AMP + diphosphate + H(+). It participates in aminoacyl-tRNA biosynthesis; selenocysteinyl-tRNA(Sec) biosynthesis; L-seryl-tRNA(Sec) from L-serine and tRNA(Sec): step 1/1. In terms of biological role, catalyzes the attachment of serine to tRNA(Ser). Is also able to aminoacylate tRNA(Sec) with serine, to form the misacylated tRNA L-seryl-tRNA(Sec), which will be further converted into selenocysteinyl-tRNA(Sec). The chain is Serine--tRNA ligase from Lactococcus lactis subsp. cremoris (strain MG1363).